The chain runs to 102 residues: Nucleoid-associated protein WS1681 (102 aa).

It belongs to the YbaB/EbfC family. Homodimer.

The protein localises to the cytoplasm. It is found in the nucleoid. Functionally, binds to DNA and alters its conformation. May be involved in regulation of gene expression, nucleoid organization and DNA protection. The protein is Nucleoid-associated protein WS1681 of Wolinella succinogenes (strain ATCC 29543 / DSM 1740 / CCUG 13145 / JCM 31913 / LMG 7466 / NCTC 11488 / FDC 602W) (Vibrio succinogenes).